Here is a 465-residue protein sequence, read N- to C-terminus: MDLFLTLLIIAIVLAVAGLLFYMQKKHVSFSIRVLLALGAGVVYGLLLQFFFAPDSSVIQQSMDWVNILGTGYVRFLQMIVMPLIFISILSAFTRMTLTKNLGKISALILGTLIATTAIAAAIGITASSVFQLEAIDIPAGEAELSHGDALEESYAGMEAATLPQQIVELIPANPFLDLTGERPTSAIGVVIFSAFLGVAYLGVRRKQPEAADTFKGIVNALYAIIMRVVTLILRLTPYGVLAIMTRTVATSDLQAISTLGTFVLASYAALIVMFVIHLIILAATGLSPITYVKKAFPVLAFAFTSRTSAGALPMNIQTQKKLGVPEGIANFAGSFGLSIGQNGCAGIYPAMLAVMIAPTVGQNPLEPTFILLLIVVIAISSFGVAGVGGGATFAAILVLSALDFPIALAGLLISIEPLIDMGRTALNVSGSMVSGIFTSKVTGSLDKEVFSDPNEQLDTQDMQG.

Helical transmembrane passes span 3-23, 34-54, 73-93, 105-125, 184-204, 224-246, 263-283, 338-358, 370-390, and 394-414; these read LFLT…LFYM, VLLA…FFAP, YVRF…LSAF, ISAL…AIGI, PTSA…YLGV, AIIM…AIMT, FVLA…IILA, LSIG…VMIA, FILL…GVGG, and FAAI…GLLI.

This sequence belongs to the dicarboxylate/amino acid:cation symporter (DAACS) (TC 2.A.23) family.

The protein resides in the membrane. Its function is as follows. Mediates uptake of L-cystine, the oxidized form of L-cysteine. This Shouchella clausii (strain KSM-K16) (Alkalihalobacillus clausii) protein is L-cystine uptake protein TcyP.